A 242-amino-acid polypeptide reads, in one-letter code: Pyridoxine 5'-phosphate synthase (242 aa).

Asn-8 contacts 3-amino-2-oxopropyl phosphate. Residue 10–11 (DH) participates in 1-deoxy-D-xylulose 5-phosphate binding. Arg-19 provides a ligand contact to 3-amino-2-oxopropyl phosphate. Catalysis depends on His-44, which acts as the Proton acceptor. Residues Arg-46 and His-51 each contribute to the 1-deoxy-D-xylulose 5-phosphate site. The active-site Proton acceptor is Glu-71. 1-deoxy-D-xylulose 5-phosphate is bound at residue Thr-101. Residue His-193 is the Proton donor of the active site. 3-amino-2-oxopropyl phosphate contacts are provided by residues Gly-194 and 215-216 (GF).

This sequence belongs to the PNP synthase family. As to quaternary structure, homooctamer; tetramer of dimers.

Its subcellular location is the cytoplasm. It catalyses the reaction 3-amino-2-oxopropyl phosphate + 1-deoxy-D-xylulose 5-phosphate = pyridoxine 5'-phosphate + phosphate + 2 H2O + H(+). Its pathway is cofactor biosynthesis; pyridoxine 5'-phosphate biosynthesis; pyridoxine 5'-phosphate from D-erythrose 4-phosphate: step 5/5. In terms of biological role, catalyzes the complicated ring closure reaction between the two acyclic compounds 1-deoxy-D-xylulose-5-phosphate (DXP) and 3-amino-2-oxopropyl phosphate (1-amino-acetone-3-phosphate or AAP) to form pyridoxine 5'-phosphate (PNP) and inorganic phosphate. The sequence is that of Pyridoxine 5'-phosphate synthase from Elusimicrobium minutum (strain Pei191).